The sequence spans 289 residues: Agmatinase (289 aa).

Residues His-112, Asp-135, His-137, Asp-139, Asp-216, and Asp-218 each contribute to the Mn(2+) site.

It belongs to the arginase family. Agmatinase subfamily. Mn(2+) is required as a cofactor.

The enzyme catalyses agmatine + H2O = urea + putrescine. Its pathway is amine and polyamine biosynthesis; putrescine biosynthesis via agmatine pathway; putrescine from agmatine: step 1/1. Functionally, catalyzes the formation of putrescine from agmatine. This is Agmatinase (speB) from Halalkalibacterium halodurans (strain ATCC BAA-125 / DSM 18197 / FERM 7344 / JCM 9153 / C-125) (Bacillus halodurans).